The sequence spans 120 residues: Large ribosomal subunit protein uL18 (120 aa).

Residues 1–22 (MKLTRRESKNRRHRRVRGKVVG) are disordered. The segment covering 8–18 (SKNRRHRRVRG) has biased composition (basic residues).

The protein belongs to the universal ribosomal protein uL18 family. As to quaternary structure, part of the 50S ribosomal subunit; part of the 5S rRNA/L5/L18/L25 subcomplex. Contacts the 5S and 23S rRNAs.

Its function is as follows. This is one of the proteins that bind and probably mediate the attachment of the 5S RNA into the large ribosomal subunit, where it forms part of the central protuberance. In Nostoc punctiforme (strain ATCC 29133 / PCC 73102), this protein is Large ribosomal subunit protein uL18.